A 224-amino-acid chain; its full sequence is EF-hand calcium-binding domain-containing protein 1 (224 aa).

The signal sequence occupies residues 1–21 (MKVSLLLLALVLVCLVQGSES). The region spanning 115–150 (IAHPDFMKAYSIADVDGDGELSPKEFYNGPYVFEMD) is the EF-hand domain. Ca(2+) contacts are provided by aspartate 128, aspartate 130, aspartate 132, glutamate 134, and glutamate 139.

In terms of tissue distribution, component of the acid-soluble organic matrix of calcified layers of the shell (at protein level).

It localises to the secreted. This chain is EF-hand calcium-binding domain-containing protein 1, found in Lottia gigantea (Giant owl limpet).